We begin with the raw amino-acid sequence, 772 residues long: uncharacterized protein (772 aa).

2 helical membrane-spanning segments follow: residues 16–36 (LITF…LFSY) and 301–321 (IGWI…LFSW). Residues 670-768 (DNIIHIIHHE…GITPGNYRQQ (99 aa)) form the HTH araC/xylS-type domain. DNA-binding regions (H-T-H motif) lie at residues 687–708 (DEIA…KKEM) and 735–758 (VKDI…KKLE).

The protein resides in the cell membrane. This is an uncharacterized protein from Bacillus subtilis (strain 168).